The sequence spans 500 residues: Glycerol kinase (500 aa).

Threonine 13 contributes to the ADP binding site. 3 residues coordinate ATP: threonine 13, threonine 14, and serine 15. Residue threonine 13 participates in sn-glycerol 3-phosphate binding. Residue arginine 17 participates in ADP binding. 4 residues coordinate sn-glycerol 3-phosphate: arginine 83, glutamate 84, tyrosine 135, and aspartate 244. Residues arginine 83, glutamate 84, tyrosine 135, aspartate 244, and glutamine 245 each coordinate glycerol. Positions 266 and 309 each coordinate ADP. 4 residues coordinate ATP: threonine 266, glycine 309, glutamine 313, and glycine 410. Glycine 410 and asparagine 414 together coordinate ADP.

The protein belongs to the FGGY kinase family.

It catalyses the reaction glycerol + ATP = sn-glycerol 3-phosphate + ADP + H(+). It functions in the pathway polyol metabolism; glycerol degradation via glycerol kinase pathway; sn-glycerol 3-phosphate from glycerol: step 1/1. With respect to regulation, inhibited by fructose 1,6-bisphosphate (FBP). Functionally, key enzyme in the regulation of glycerol uptake and metabolism. Catalyzes the phosphorylation of glycerol to yield sn-glycerol 3-phosphate. This Burkholderia vietnamiensis (strain G4 / LMG 22486) (Burkholderia cepacia (strain R1808)) protein is Glycerol kinase.